A 227-amino-acid polypeptide reads, in one-letter code: MELKKIAVGLTALLGMSVANAHNVWLEPASSQDEYVVKFGHEQTETYPESKLKSIQALNSQGKLTAVDYQFRNGEAYLMPKSDLVFVHFDNGVWSKLPSGKYVEKTKREEPTAEFSTNPVKFGKAILKWDAESFKSHQQAYELIPQEKAQANKPLSILVLHNGKPVQGIKVGVSEDAPFNLTNEKGIAQFTPTKGFNKVWAEFEEKVTNNADYDRRTVEYMLTFDAQ.

The signal sequence occupies residues 1-21 (MELKKIAVGLTALLGMSVANA).

This is an uncharacterized protein from Haemophilus influenzae (strain ATCC 51907 / DSM 11121 / KW20 / Rd).